The following is a 361-amino-acid chain: Probable mannose-1-phosphate guanylyltransferase 1 (361 aa).

Residues L6 and V7 each coordinate GDP-alpha-D-mannose. Diphosphate-binding residues include G9, G11, T12, R13, and K23. GDP-alpha-D-mannose-binding residues include G85, N109, D111, G146, and N173.

The protein belongs to the transferase hexapeptide repeat family.

It carries out the reaction alpha-D-mannose 1-phosphate + GTP + H(+) = GDP-alpha-D-mannose + diphosphate. It functions in the pathway nucleotide-sugar biosynthesis; GDP-alpha-D-mannose biosynthesis; GDP-alpha-D-mannose from alpha-D-mannose 1-phosphate (GTP route): step 1/1. In terms of biological role, catalyzes a reaction of the Smirnoff-Wheeler pathway, the major route to ascorbate biosynthesis in plants. In Oryza sativa subsp. japonica (Rice), this protein is Probable mannose-1-phosphate guanylyltransferase 1.